The primary structure comprises 107 residues: Proteinase inhibitor 1 (107 aa).

Positions 1-23 are cleaved as a signal peptide; that stretch reads MELKFAHIIVFFLLATSFETLMA. A propeptide spanning residues 24–36 is cleaved from the precursor; the sequence is RKESDGPEVIQLL.

This sequence belongs to the protease inhibitor I13 (potato type I serine protease inhibitor) family.

This chain is Proteinase inhibitor 1, found in Solanum tuberosum (Potato).